The primary structure comprises 242 residues: Ubiquinone biosynthesis O-methyltransferase (242 aa).

S-adenosyl-L-methionine is bound by residues Arg44, Gly64, Asp85, and Met129.

It belongs to the methyltransferase superfamily. UbiG/COQ3 family.

The enzyme catalyses a 3-demethylubiquinol + S-adenosyl-L-methionine = a ubiquinol + S-adenosyl-L-homocysteine + H(+). The catalysed reaction is a 3-(all-trans-polyprenyl)benzene-1,2-diol + S-adenosyl-L-methionine = a 2-methoxy-6-(all-trans-polyprenyl)phenol + S-adenosyl-L-homocysteine + H(+). It participates in cofactor biosynthesis; ubiquinone biosynthesis. In terms of biological role, O-methyltransferase that catalyzes the 2 O-methylation steps in the ubiquinone biosynthetic pathway. In Salmonella choleraesuis (strain SC-B67), this protein is Ubiquinone biosynthesis O-methyltransferase.